The following is a 197-amino-acid chain: CASP-like protein 1B1 (197 aa).

Residue alanine 2 is modified to N-acetylalanine. Residues 2–17 (AVSKLTLAATSGKSCK) are Cytoplasmic-facing. Residues 18 to 38 (ILLGLRLLAFSATLSAAIVMG) form a helical membrane-spanning segment. Topologically, residues 39–69 (LNKETKTFIVGKVGNTPIQATFTAKFDHTPA) are extracellular. The chain crosses the membrane as a helical span at residues 70-90 (FVFFVVANAMVSFHNLLMIAL). The Cytoplasmic segment spans residues 91-106 (QIFGGKMEFTGFRLLS). The chain crosses the membrane as a helical span at residues 107-127 (VAILDMLNVTLISAAANAAAF). The Extracellular portion of the chain corresponds to 128-156 (MAEVGKNGNKHARWDKICDRFATYCDHGA). The chain crosses the membrane as a helical span at residues 157-177 (GALIAAFAGVILMLIISAASI). The Cytoplasmic segment spans residues 178-197 (SRLVQPNKCCSTTASPSVVP).

This sequence belongs to the Casparian strip membrane proteins (CASP) family. In terms of assembly, homodimer and heterodimers.

The protein resides in the cell membrane. This Arabidopsis thaliana (Mouse-ear cress) protein is CASP-like protein 1B1.